A 529-amino-acid polypeptide reads, in one-letter code: Peptide chain release factor 3 (529 aa).

Residues 7-275 enclose the tr-type G domain; it reads EQRRTFGIIS…AVVELAPSPR (269 aa). Residues 16 to 23, 84 to 88, and 138 to 141 contribute to the GTP site; these read SHPDAGKT, DTPGH, and NKLD.

It belongs to the TRAFAC class translation factor GTPase superfamily. Classic translation factor GTPase family. PrfC subfamily.

The protein resides in the cytoplasm. Functionally, increases the formation of ribosomal termination complexes and stimulates activities of RF-1 and RF-2. It binds guanine nucleotides and has strong preference for UGA stop codons. It may interact directly with the ribosome. The stimulation of RF-1 and RF-2 is significantly reduced by GTP and GDP, but not by GMP. This Syntrophus aciditrophicus (strain SB) protein is Peptide chain release factor 3.